We begin with the raw amino-acid sequence, 172 residues long: Ribosome maturation factor RimM (172 aa).

The region spanning 97–170 is the PRC barrel domain; the sequence is ENEFYFHEII…KITIEVMEGL (74 aa).

It belongs to the RimM family. In terms of assembly, binds ribosomal protein uS19.

Its subcellular location is the cytoplasm. Functionally, an accessory protein needed during the final step in the assembly of 30S ribosomal subunit, possibly for assembly of the head region. Essential for efficient processing of 16S rRNA. May be needed both before and after RbfA during the maturation of 16S rRNA. It has affinity for free ribosomal 30S subunits but not for 70S ribosomes. The protein is Ribosome maturation factor RimM of Listeria innocua serovar 6a (strain ATCC BAA-680 / CLIP 11262).